We begin with the raw amino-acid sequence, 1081 residues long: MKKNQFANKLIVIDLLSVQRESFYSFLTEGLAKELNNFSPIIDYTGKLELHLVTNQLVIKKPKFSFEEAKRRDCSYTISINIVTQLFNKNSGDVKEQEILLGEIPLMTQKGTFVINGAERVIVNQIVRSPGIYFNSEMDKNNLKTFNFLIIPNRGAWLKCEIDKNDLIWIRIDKNKKINLSIFFKALGIDHDDLRIKNAFRQPEFIYKNLNKDENYTQQEALEELHKKLFPGEPATSEASTKILYFKFFNPKKYDLGIVGRKKINKKLDLNSPENIRILTIQDILSGINYLINLKFGFGNIDDIDHLANRRLKSVGELLQSQISIGLIRLERLIKERMTICEQSSLVPSALINPKPIFAAIKEFFNSSQLSQFMDQVNPLAELTHKRRVSSLGPGGLSKERAGFAVRDIHPSHYGRICPIETPEGPNAGLIGSLAIYARINPDGFIEAPFYKVNQGQVLKNKGIIYLDAEQEDEFKIAPGDIRINETNFIKEINVPVRYRQEFTQCPAEEIDFIAVSPIQVISAATSLIPFLEHNDANRALMGSNMQRQAVPLIFPERPLVGTGLEAQIAKDSGIMAISRSNGIVKFTSAEKIIVTDSSNNQITYNLQKYQKSNQETCINHRPIVWPGERIKKGQILADGSATDTGELALGRDVLVAYMPWEGYNYEDAFLISDRLVYEDLYTSIHIEKYEIEARQTKLGPEEITRNIPNVGENSLKQLDENGIVVVSSFVESGSILVGKVTPKGESDQPPESKLLQAIFGEKNKDVKDTSLRLPNGTRGRVVDVRIFSREKGDELAVGINYIVRIYVAQKRKIQIGDKMAGRHGNKGIISKILPRQDMPYLPNGTPVDIILNPLGVPSRMNVGQIFECILGISAFNLKKRFRILPFDEMYESDSSRILINQKLKEAQTLTNLDYLFNENHLGKVALFDGRSGEKFDNPVLVGKIYMMKLVHLVDDKIHSRSTGPYSLVTQQPLGGKAQQGGQRLGEMEVWAFEAFGAAYALQELLTIKSDDIQGRNEALTAIVRGKTIPKPGTPESLKVLMREIQSLGLDIAAYRLPNLHHGEIKSIEIDLTHNKIVQKR.

It belongs to the RNA polymerase beta chain family. As to quaternary structure, in plastids the minimal PEP RNA polymerase catalytic core is composed of four subunits: alpha, beta, beta', and beta''. When a (nuclear-encoded) sigma factor is associated with the core the holoenzyme is formed, which can initiate transcription.

It localises to the plastid. It is found in the chloroplast. The enzyme catalyses RNA(n) + a ribonucleoside 5'-triphosphate = RNA(n+1) + diphosphate. DNA-dependent RNA polymerase catalyzes the transcription of DNA into RNA using the four ribonucleoside triphosphates as substrates. The protein is DNA-directed RNA polymerase subunit beta of Cyanidium caldarium (Red alga).